Consider the following 306-residue polypeptide: Ribonuclease Z (306 aa).

Residues H61, H63, D65, H66, H137, D207, and H263 each coordinate Zn(2+). D65 serves as the catalytic Proton acceptor.

Belongs to the RNase Z family. Homodimer. Requires Zn(2+) as cofactor.

The enzyme catalyses Endonucleolytic cleavage of RNA, removing extra 3' nucleotides from tRNA precursor, generating 3' termini of tRNAs. A 3'-hydroxy group is left at the tRNA terminus and a 5'-phosphoryl group is left at the trailer molecule.. Its function is as follows. Zinc phosphodiesterase, which displays some tRNA 3'-processing endonuclease activity. Probably involved in tRNA maturation, by removing a 3'-trailer from precursor tRNA. The chain is Ribonuclease Z from Thermococcus sibiricus (strain DSM 12597 / MM 739).